The chain runs to 234 residues: Segregation and condensation protein A (234 aa).

This sequence belongs to the ScpA family. Component of a cohesin-like complex composed of ScpA, ScpB and the Smc homodimer, in which ScpA and ScpB bind to the head domain of Smc. The presence of the three proteins is required for the association of the complex with DNA.

The protein localises to the cytoplasm. In terms of biological role, participates in chromosomal partition during cell division. May act via the formation of a condensin-like complex containing Smc and ScpB that pull DNA away from mid-cell into both cell halves. The chain is Segregation and condensation protein A from Streptococcus pyogenes serotype M6 (strain ATCC BAA-946 / MGAS10394).